The following is a 168-amino-acid chain: 2-C-methyl-D-erythritol 2,4-cyclodiphosphate synthase (168 aa).

Residues aspartate 11 and histidine 13 each contribute to the a divalent metal cation site. 4-CDP-2-C-methyl-D-erythritol 2-phosphate is bound by residues aspartate 11–histidine 13 and histidine 41–serine 42. Position 49 (histidine 49) interacts with a divalent metal cation. Residues aspartate 63–glycine 65, phenylalanine 68–aspartate 72, threonine 139–glutamate 142, phenylalanine 146, and arginine 149 each bind 4-CDP-2-C-methyl-D-erythritol 2-phosphate.

Belongs to the IspF family. Homotrimer. It depends on a divalent metal cation as a cofactor.

It carries out the reaction 4-CDP-2-C-methyl-D-erythritol 2-phosphate = 2-C-methyl-D-erythritol 2,4-cyclic diphosphate + CMP. It functions in the pathway isoprenoid biosynthesis; isopentenyl diphosphate biosynthesis via DXP pathway; isopentenyl diphosphate from 1-deoxy-D-xylulose 5-phosphate: step 4/6. Its function is as follows. Involved in the biosynthesis of isopentenyl diphosphate (IPP) and dimethylallyl diphosphate (DMAPP), two major building blocks of isoprenoid compounds. Catalyzes the conversion of 4-diphosphocytidyl-2-C-methyl-D-erythritol 2-phosphate (CDP-ME2P) to 2-C-methyl-D-erythritol 2,4-cyclodiphosphate (ME-CPP) with a corresponding release of cytidine 5-monophosphate (CMP). The polypeptide is 2-C-methyl-D-erythritol 2,4-cyclodiphosphate synthase (Psychrobacter cryohalolentis (strain ATCC BAA-1226 / DSM 17306 / VKM B-2378 / K5)).